The primary structure comprises 354 residues: DNA integrity scanning protein DisA (354 aa).

The DAC domain maps to G6–S144. ATP is bound by residues G73, L91, and T104–T108.

Belongs to the DisA family. Homooctamer. Requires Mg(2+) as cofactor.

The enzyme catalyses 2 ATP = 3',3'-c-di-AMP + 2 diphosphate. Functionally, participates in a DNA-damage check-point that is active prior to asymmetric division when DNA is damaged. DisA forms globular foci that rapidly scan along the chromosomes during sporulation, searching for lesions. When a lesion is present, DisA pauses at the lesion site. This triggers a cellular response that culminates in a temporary block in sporulation initiation. In terms of biological role, also has diadenylate cyclase activity, catalyzing the condensation of 2 ATP molecules into cyclic di-AMP (c-di-AMP). c-di-AMP acts as a signaling molecule that couples DNA integrity with progression of sporulation. The rise in c-di-AMP level generated by DisA while scanning the chromosome, operates as a positive signal that advances sporulation; upon encountering a lesion, the DisA focus arrests at the damaged site and halts c-di-AMP synthesis. This chain is DNA integrity scanning protein DisA, found in Clostridium botulinum (strain Eklund 17B / Type B).